Here is a 328-residue protein sequence, read N- to C-terminus: E3 ubiquitin-protein ligase RING1-like (328 aa).

Serine 2 is subject to N-acetylserine. An RING-type; atypical zinc finger spans residues 216 to 257 (CAVCMDEFEDGSDVKQMPCKHVFHQDCLLPWLELHNSCPVCR). The interval 264-328 (DPDYENRSQG…NLETRGEDLD (65 aa)) is disordered. Residues 306–319 (SGSGSGAPGTGGGN) show a composition bias toward gly residues.

Auto-ubiquitinated as part of the enzymatic reaction. In terms of tissue distribution, expressed in leaves, roots, trichomes, stipules, and also in anthers and stigma of flowers.

It catalyses the reaction S-ubiquitinyl-[E2 ubiquitin-conjugating enzyme]-L-cysteine + [acceptor protein]-L-lysine = [E2 ubiquitin-conjugating enzyme]-L-cysteine + N(6)-ubiquitinyl-[acceptor protein]-L-lysine.. Its pathway is protein modification; protein ubiquitination. Its function is as follows. E3 ubiquitin-protein ligase which accepts ubiquitin from an E2 ubiquitin-conjugating enzyme in the form of a thioester and then directly transfers the ubiquitin to targeted substrates. Promotes polyubiquitination of target proteins. The sequence is that of E3 ubiquitin-protein ligase RING1-like from Arabidopsis thaliana (Mouse-ear cress).